The sequence spans 117 residues: MARVKTGVVRRRRHKKVLKLARGFYSGRRKHFRKAKEQLERSLVYAYRDRRRKKRDFRRLWIVRINAACRLNDISYSKFINGLKKAGIELDRKILADLAMNDAAAFAKIADAAKKAL.

It belongs to the bacterial ribosomal protein bL20 family.

Functionally, binds directly to 23S ribosomal RNA and is necessary for the in vitro assembly process of the 50S ribosomal subunit. It is not involved in the protein synthesizing functions of that subunit. This chain is Large ribosomal subunit protein bL20, found in Campylobacter lari (strain RM2100 / D67 / ATCC BAA-1060).